We begin with the raw amino-acid sequence, 136 residues long: Snaclec rhodocytin subunit alpha (136 aa).

3 cysteine pairs are disulfide-bonded: C5/C16, C33/C131, and C106/C123. The region spanning 12 to 132 (YDQHCYQAFN…CEQMHAFVCK (121 aa)) is the C-type lectin domain.

This sequence belongs to the snaclec family. Dimer (non-covalently linked) of heterodimers of subunits alpha and beta (disulfide-linked). In terms of tissue distribution, expressed by the venom gland.

Its subcellular location is the secreted. Functionally, elicits platelet aggregation by the binding to the C-type lectin domain family 1 member B (CLEC1B/CLEC2). Binding leads to tyrosine phosphorylation in the cytoplasmic tail of CLEC1B, which promotes the binding of spleen tyrosine kinase (Syk), subsequent activation of PLC-gamma-2, and platelet activation and aggregation. Binding to GPIbalpha (GP1BA) and alpha-2/beta-1 (ITGA2/ITGB1) may also induce aggregation, but this is controversial. The sequence is that of Snaclec rhodocytin subunit alpha from Calloselasma rhodostoma (Malayan pit viper).